A 125-amino-acid chain; its full sequence is MWQKLAWIALAGAGGTLSRYALSGLVQNLCGASFPWGTWVVNGLGCFLFGMIWALAEERLLITGEIRFIVLTGFMGAFTTFSTFAFEASQFLRDSEWLLAAIHLIGQNSLGLVCVFLGFTISQII.

A run of 4 helical transmembrane segments spans residues 6 to 26 (AWIA…SGLV), 36 to 56 (WGTW…WALA), 68 to 88 (FIVL…AFEA), and 97 to 117 (WLLA…CVFL). Positions 76 and 79 each coordinate Na(+).

This sequence belongs to the fluoride channel Fluc/FEX (TC 1.A.43) family.

The protein localises to the cell inner membrane. It carries out the reaction fluoride(in) = fluoride(out). Na(+) is not transported, but it plays an essential structural role and its presence is essential for fluoride channel function. Functionally, fluoride-specific ion channel. Important for reducing fluoride concentration in the cell, thus reducing its toxicity. In Nitrosococcus oceani (strain ATCC 19707 / BCRC 17464 / JCM 30415 / NCIMB 11848 / C-107), this protein is Fluoride-specific ion channel FluC.